Here is a 351-residue protein sequence, read N- to C-terminus: Thiamine-phosphate synthase (351 aa).

The tract at residues M1–Q129 is unknown. The disordered stretch occupies residues L65–E85. A thiamine-phosphate synthase region spans residues V130–L351. Residues Q177–K181 and N209 each bind 4-amino-2-methyl-5-(diphosphooxymethyl)pyrimidine. Residues D210 and D229 each contribute to the Mg(2+) site. S248 serves as a coordination point for 4-amino-2-methyl-5-(diphosphooxymethyl)pyrimidine. T274 to T276 is a binding site for 2-[(2R,5Z)-2-carboxy-4-methylthiazol-5(2H)-ylidene]ethyl phosphate. K277 contacts 4-amino-2-methyl-5-(diphosphooxymethyl)pyrimidine. G304 lines the 2-[(2R,5Z)-2-carboxy-4-methylthiazol-5(2H)-ylidene]ethyl phosphate pocket.

The protein belongs to the thiamine-phosphate synthase family. It depends on Mg(2+) as a cofactor.

The catalysed reaction is 2-[(2R,5Z)-2-carboxy-4-methylthiazol-5(2H)-ylidene]ethyl phosphate + 4-amino-2-methyl-5-(diphosphooxymethyl)pyrimidine + 2 H(+) = thiamine phosphate + CO2 + diphosphate. The enzyme catalyses 2-(2-carboxy-4-methylthiazol-5-yl)ethyl phosphate + 4-amino-2-methyl-5-(diphosphooxymethyl)pyrimidine + 2 H(+) = thiamine phosphate + CO2 + diphosphate. It catalyses the reaction 4-methyl-5-(2-phosphooxyethyl)-thiazole + 4-amino-2-methyl-5-(diphosphooxymethyl)pyrimidine + H(+) = thiamine phosphate + diphosphate. It participates in cofactor biosynthesis; thiamine diphosphate biosynthesis; thiamine phosphate from 4-amino-2-methyl-5-diphosphomethylpyrimidine and 4-methyl-5-(2-phosphoethyl)-thiazole: step 1/1. Functionally, condenses 4-methyl-5-(beta-hydroxyethyl)thiazole monophosphate (THZ-P) and 2-methyl-4-amino-5-hydroxymethyl pyrimidine pyrophosphate (HMP-PP) to form thiamine monophosphate (TMP). The polypeptide is Thiamine-phosphate synthase (Nostoc punctiforme (strain ATCC 29133 / PCC 73102)).